A 216-amino-acid chain; its full sequence is Heart- and neural crest derivatives-expressed protein 1 (216 aa).

3 disordered regions span residues 1 to 20 (MNLV…HPPH), 53 to 109 (APDF…RTES), and 165 to 203 (ELKK…KGRT). Residues 8 to 18 (AHHHHHHHSHP) show a composition bias toward basic residues. Residues 65-78 (TAVAAAAYGPDARP) show a composition bias toward low complexity. Positions 92-104 (LPKRKGSGPKKER) are enriched in basic residues. The 53-residue stretch at 94 to 146 (KRKGSGPKKERRRTESINSAFAELRECIPNVPADTKLSKIKTLRLATSYIAYL) folds into the bHLH domain. Threonine 107 is subject to Phosphothreonine; by PLK4. Serine 109 is modified (phosphoserine; by PLK4). The segment covering 165–174 (ELKKTDGGRE) has biased composition (basic and acidic residues).

Efficient DNA binding requires dimerization with another bHLH protein. Forms homodimers and heterodimers with TCF3 gene products E12 and E47, HAND2 and HEY1, HEY2 and HEYL (hairy-related transcription factors). Interacts with MDFIC. Interacts with SOX15; the interaction enhances HAND1-induced differentiation of trophoblast giant cells. Phosphorylation by PLK4 disrupts the interaction with MDFIC and leads to translocation into the nucleoplasm, allowing dimerization and transcription factor activity. In terms of tissue distribution, smooth muscle cells of the gut and adrenal tissue.

The protein localises to the nucleus. It is found in the nucleoplasm. It localises to the nucleolus. Transcription factor that plays an essential role in both trophoblast giant cell differentiation and in cardiac morphogenesis. Binds the DNA sequence 5'-NRTCTG-3' (non-canonical E-box). Acts as a transcriptional repressor of SOX15. In the adult, could be required for ongoing expression of cardiac-specific genes. In Mus musculus (Mouse), this protein is Heart- and neural crest derivatives-expressed protein 1 (Hand1).